The primary structure comprises 434 residues: Trigger factor (434 aa).

Residues 161–246 (EDRVTVDFNG…LKKVEERELP (86 aa)) form the PPIase FKBP-type domain.

This sequence belongs to the FKBP-type PPIase family. Tig subfamily.

Its subcellular location is the cytoplasm. It carries out the reaction [protein]-peptidylproline (omega=180) = [protein]-peptidylproline (omega=0). Involved in protein export. Acts as a chaperone by maintaining the newly synthesized protein in an open conformation. Functions as a peptidyl-prolyl cis-trans isomerase. This chain is Trigger factor, found in Proteus mirabilis (strain HI4320).